The sequence spans 312 residues: Ribosomal protein L11 methyltransferase (312 aa).

Residues T162, G183, D205, and N248 each coordinate S-adenosyl-L-methionine.

This sequence belongs to the methyltransferase superfamily. PrmA family.

The protein resides in the cytoplasm. It catalyses the reaction L-lysyl-[protein] + 3 S-adenosyl-L-methionine = N(6),N(6),N(6)-trimethyl-L-lysyl-[protein] + 3 S-adenosyl-L-homocysteine + 3 H(+). In terms of biological role, methylates ribosomal protein L11. This is Ribosomal protein L11 methyltransferase from Geobacillus kaustophilus (strain HTA426).